The sequence spans 199 residues: Nucleoside triphosphate pyrophosphatase (199 aa).

The active-site Proton acceptor is the aspartate 76.

This sequence belongs to the Maf family. A divalent metal cation is required as a cofactor.

The protein localises to the cytoplasm. The enzyme catalyses a ribonucleoside 5'-triphosphate + H2O = a ribonucleoside 5'-phosphate + diphosphate + H(+). The catalysed reaction is a 2'-deoxyribonucleoside 5'-triphosphate + H2O = a 2'-deoxyribonucleoside 5'-phosphate + diphosphate + H(+). In terms of biological role, nucleoside triphosphate pyrophosphatase. May have a dual role in cell division arrest and in preventing the incorporation of modified nucleotides into cellular nucleic acids. In Caulobacter vibrioides (strain ATCC 19089 / CIP 103742 / CB 15) (Caulobacter crescentus), this protein is Nucleoside triphosphate pyrophosphatase.